The primary structure comprises 365 residues: Alanine racemase (365 aa).

Catalysis depends on lysine 32, which acts as the Proton acceptor; specific for D-alanine. Residue lysine 32 is modified to N6-(pyridoxal phosphate)lysine. Arginine 128 contacts substrate. Catalysis depends on tyrosine 257, which acts as the Proton acceptor; specific for L-alanine. Residue methionine 305 coordinates substrate.

It belongs to the alanine racemase family. Requires pyridoxal 5'-phosphate as cofactor.

The enzyme catalyses L-alanine = D-alanine. It functions in the pathway amino-acid biosynthesis; D-alanine biosynthesis; D-alanine from L-alanine: step 1/1. Catalyzes the interconversion of L-alanine and D-alanine. May also act on other amino acids. The chain is Alanine racemase (alr) from Francisella tularensis subsp. holarctica (strain OSU18).